The following is a 77-amino-acid chain: Large ribosomal subunit protein bL28 (77 aa).

A disordered region spans residues M1–T25.

This sequence belongs to the bacterial ribosomal protein bL28 family.

In Paraburkholderia phymatum (strain DSM 17167 / CIP 108236 / LMG 21445 / STM815) (Burkholderia phymatum), this protein is Large ribosomal subunit protein bL28.